The primary structure comprises 316 residues: HPr kinase/phosphorylase (316 aa).

Residues His141 and Lys162 contribute to the active site. 156 to 163 (GESGVGKS) is an ATP binding site. Ser163 lines the Mg(2+) pocket. Asp180 functions as the Proton acceptor; for phosphorylation activity. Proton donor; for dephosphorylation activity in the catalytic mechanism. Positions 204 to 213 (MEIRGIGIID) are important for the catalytic mechanism of both phosphorylation and dephosphorylation. Glu205 is a Mg(2+) binding site. Residue Arg246 is part of the active site. The segment at 267–272 (PVKVGR) is important for the catalytic mechanism of dephosphorylation.

It belongs to the HPrK/P family. In terms of assembly, homohexamer. The cofactor is Mg(2+).

It carries out the reaction [HPr protein]-L-serine + ATP = [HPr protein]-O-phospho-L-serine + ADP + H(+). The enzyme catalyses [HPr protein]-O-phospho-L-serine + phosphate + H(+) = [HPr protein]-L-serine + diphosphate. In terms of biological role, catalyzes the ATP- as well as the pyrophosphate-dependent phosphorylation of a specific serine residue in HPr, a phosphocarrier protein of the phosphoenolpyruvate-dependent sugar phosphotransferase system (PTS). HprK/P also catalyzes the pyrophosphate-producing, inorganic phosphate-dependent dephosphorylation (phosphorolysis) of seryl-phosphorylated HPr (P-Ser-HPr). The two antagonistic activities of HprK/P are regulated by several intracellular metabolites, which change their concentration in response to the absence or presence of rapidly metabolisable carbon sources (glucose, fructose, etc.) in the growth medium. Therefore, by controlling the phosphorylation state of HPr, HPrK/P is a sensor enzyme that plays a major role in the regulation of carbon metabolism and sugar transport: it mediates carbon catabolite repression (CCR), and regulates PTS-catalyzed carbohydrate uptake and inducer exclusion. The chain is HPr kinase/phosphorylase from Lactobacillus delbrueckii subsp. bulgaricus (strain ATCC 11842 / DSM 20081 / BCRC 10696 / JCM 1002 / NBRC 13953 / NCIMB 11778 / NCTC 12712 / WDCM 00102 / Lb 14).